The sequence spans 222 residues: 3,4-dihydroxy-2-butanone 4-phosphate synthase (222 aa).

D-ribulose 5-phosphate-binding positions include 37-38, aspartate 42, 150-154, and glutamate 174; these read RE and RPGHT. Glutamate 38 is a binding site for Mg(2+). Histidine 153 is a Mg(2+) binding site.

This sequence belongs to the DHBP synthase family. Homodimer. Requires Mg(2+) as cofactor. It depends on Mn(2+) as a cofactor.

It carries out the reaction D-ribulose 5-phosphate = (2S)-2-hydroxy-3-oxobutyl phosphate + formate + H(+). Its pathway is cofactor biosynthesis; riboflavin biosynthesis; 2-hydroxy-3-oxobutyl phosphate from D-ribulose 5-phosphate: step 1/1. Functionally, catalyzes the conversion of D-ribulose 5-phosphate to formate and 3,4-dihydroxy-2-butanone 4-phosphate. The chain is 3,4-dihydroxy-2-butanone 4-phosphate synthase from Chlorobium limicola (strain DSM 245 / NBRC 103803 / 6330).